We begin with the raw amino-acid sequence, 75 residues long: M-myrmeciitoxin-Mp2a (75 aa).

Positions 1-26 are cleaved as a signal peptide; the sequence is MKLSCLLLTLAIIFVLTIVHAPNVEA. The propeptide occupies 27–48; sequence KALADPESDAVGFADAVGEADP. Residue Leu74 is modified to Leucine amide.

This sequence belongs to the formicidae venom precursor-01 superfamily. Ant pilosulin family. In terms of assembly, heterodimer with M-MIITX-Mp2b (pilosin-3b) (AC P0C023); disulfide-linked. Only heterodimers (and not monomers) have been identified in the venom. As to expression, expressed by the venom gland.

It is found in the secreted. In terms of biological role, heterodimer protein that may serve both defensive (pain-inducing) and predatory (insecticidal) roles. Has membrane-disrupting activity and shows induction of non-specific calcium influx into cells,. Shows broad-spectrum activity against a diverse range of bacteria, and cell lines, as well as hemolytic activity (EC(50)=2.18 uM). In vivo, shows moderate insecticidal activity against D.melanogaster and potent anthelmintic activity against the veterinary nematode H.contortus. In addition, intraplantar injection into mice induces nocifensive behavior and mechanical allodynia. The sequence is that of M-myrmeciitoxin-Mp2a from Myrmecia pilosula (Jack jumper ant).